Here is a 469-residue protein sequence, read N- to C-terminus: DNA (cytosine-5-)-methyltransferase M.ApeKI (469 aa).

One can recognise an SAM-dependent MTase C5-type domain in the interval 4–469 (YSTISLFSGA…EALAEVLDAV (466 aa)). Residue cysteine 93 is part of the active site.

It belongs to the class I-like SAM-binding methyltransferase superfamily. C5-methyltransferase family.

The enzyme catalyses a 2'-deoxycytidine in DNA + S-adenosyl-L-methionine = a 5-methyl-2'-deoxycytidine in DNA + S-adenosyl-L-homocysteine + H(+). In terms of biological role, cytosine methylase that recognizes the double-stranded sequence 5'-GC(A/T)GC-3', methylates C-5 position of the second cytosine on both strands, and protects the DNA from cleavage by the ApeKI endonuclease. This chain is DNA (cytosine-5-)-methyltransferase M.ApeKI, found in Aeropyrum pernix (strain ATCC 700893 / DSM 11879 / JCM 9820 / NBRC 100138 / K1).